A 456-amino-acid polypeptide reads, in one-letter code: Exodeoxyribonuclease 7 large subunit (456 aa).

The protein belongs to the XseA family. Heterooligomer composed of large and small subunits.

It localises to the cytoplasm. It catalyses the reaction Exonucleolytic cleavage in either 5'- to 3'- or 3'- to 5'-direction to yield nucleoside 5'-phosphates.. Functionally, bidirectionally degrades single-stranded DNA into large acid-insoluble oligonucleotides, which are then degraded further into small acid-soluble oligonucleotides. The protein is Exodeoxyribonuclease 7 large subunit of Lactobacillus johnsonii (strain CNCM I-12250 / La1 / NCC 533).